The primary structure comprises 388 residues: Cobalt-precorrin-5B C(1)-methyltransferase (388 aa).

This sequence belongs to the CbiD family.

The catalysed reaction is Co-precorrin-5B + S-adenosyl-L-methionine = Co-precorrin-6A + S-adenosyl-L-homocysteine. Its pathway is cofactor biosynthesis; adenosylcobalamin biosynthesis; cob(II)yrinate a,c-diamide from sirohydrochlorin (anaerobic route): step 6/10. Functionally, catalyzes the methylation of C-1 in cobalt-precorrin-5B to form cobalt-precorrin-6A. The protein is Cobalt-precorrin-5B C(1)-methyltransferase of Rubrobacter xylanophilus (strain DSM 9941 / JCM 11954 / NBRC 16129 / PRD-1).